A 114-amino-acid polypeptide reads, in one-letter code: uncharacterized protein (114 aa).

One can recognise an HIT domain in the interval 6–114; that stretch reads IFGKIIRREI…GGRSLAWPPG (109 aa). The short motif at 98–102 is the Histidine triad motif element; sequence HLHIH.

This is an uncharacterized protein from Synechococcus elongatus (strain ATCC 33912 / PCC 7942 / FACHB-805) (Anacystis nidulans R2).